Consider the following 102-residue polypeptide: Integration host factor subunit beta (102 aa).

Belongs to the bacterial histone-like protein family. Heterodimer of an alpha and a beta chain.

This protein is one of the two subunits of integration host factor, a specific DNA-binding protein that functions in genetic recombination as well as in transcriptional and translational control. This is Integration host factor subunit beta from Rhizobium rhizogenes (strain K84 / ATCC BAA-868) (Agrobacterium radiobacter).